The following is a 277-amino-acid chain: Zaragozic acid A biosynthesis cluster protein 1 (277 aa).

The protein operates within secondary metabolite biosynthesis. Its function is as follows. Part of the gene cluster that mediates the biosynthesis of squalestatin S1 (SQS1, also known as zaragozic acid A), a heavily oxidized fungal polyketide that offers potent cholesterol lowering activity by targeting squalene synthase (SS). SQS1 is composed of a 2,8-dioxobicyclic[3.2.1]octane-3,4,5-tricarboxyclic acid core that is connected to two lipophilic polyketide arms. These initial steps feature the priming of an unusual benzoic acid starter unit onto the highly reducing polyketide synthase clz14, followed by oxaloacetate extension and product release to generate a tricarboxylic acid containing product. The phenylalanine ammonia lyase (PAL) clz10 and the acyl-CoA ligase clz12 are involved in transforming phenylalanine into benzoyl-CoA. The citrate synthase-like protein clz17 is involved in connecting the C-alpha-carbons of the hexaketide chain and oxaloacetate to afford the tricarboxylic acid unit. The potential hydrolytic enzymes, clz11 and clz13, are in close proximity to pks2 and may participate in product release. On the other side, the tetraketide arm is synthesized by a the squalestatin tetraketide synthase clz2 and enzymatically esterified to the core in the last biosynthetic step, by the acetyltransferase clz6. The biosynthesis of the tetraketide must involve 3 rounds of chain extension. After the first and second rounds methyl-transfer occurs, and in all rounds of extension the ketoreductase and dehydratase are active. The enoyl reductase and C-MeT of clz2 are not active in the final round of extension. The acetyltransferase clz6 appears to have a broad substrate selectivity for its acyl CoA substrate, allowing the in vitro synthesis of novel squalestatins. The biosynthesis of SQS1 requires several oxidative steps likely performed by oxidoreductases clz3, clz15 and clz16. Finally, in support of the identification of the cluster as being responsible for SQS1 production, the cluster contains a gene encoding a putative squalene synthase (SS) clz20, suggesting a likely mechanism for self-resistance. This chain is Zaragozic acid A biosynthesis cluster protein 1, found in Cochliobolus lunatus (Filamentous fungus).